The sequence spans 605 residues: MVSYWPVLIVLCLLPICHAKSYFADFVNGKGPFKQADALKFMDKMTILNKLQADILGIPQPDEFSALDFEDKIESKPDEIPYLFEGDMVLTDEQMDLIIKNVRDQYWARKSSTNEFLYAIRGKRSMTSFLSERWSFPVPYYIDTSSGVNTNAVLAGVAKWEQETCARFTRLNSYSSSSRQNALRFISGNGCYSNIGKVSRFPQDVSIGWGCTSLGTVCHEIGHALGFYHEQARYDRDDYVSILTQNIQDMYLSQFTKQSASSMVDYGVGYDYGSVMHYDQAAFSSTGGNTIATRDPNFQATIGQRVAPSFADVKRINFAYCNSTCSNYLDCQNGGYINPNDCNNCKCPPGFGGQLCDVAGTNSNGCGAGDITATSSIQTISASGALTCNYVIKAPVGAKVYFQMTAATFSRYSPCTTNYLEINYGRDFSRVGARFCASYPTISLSETNTLVVIYKGVNGARFSLNYRYDPVTFSTSAPTTTSTTTTTAPITVPTVSPTTTTTRQTTTTARTSTTTTTTQAPPTTTTSTSQCASWSACSAQCGGCGTQSRRCGTYVETVYCNTNPCTGGYCCRPFFYVTSFGTGYCRRPGADTPAAPQRYVEQRKG.

The first 19 residues, 1-19 (MVSYWPVLIVLCLLPICHA), serve as a signal peptide directing secretion. Positions 20-124 (KSYFADFVNG…EFLYAIRGKR (105 aa)) are excised as a propeptide. Residues 124 to 322 (RSMTSFLSER…VKRINFAYCN (199 aa)) form the Peptidase M12A domain. 2 disulfide bridges follow: Cys165–Cys321 and Cys191–Cys211. A Zn(2+)-binding site is contributed by His219. Glu220 is a catalytic residue. Positions 223 and 229 each coordinate Zn(2+). The region spanning 317–357 (NFAYCNSTCSNYLDCQNGGYINPNDCNNCKCPPGFGGQLCD) is the EGF-like domain. Residue Asn322 is glycosylated (N-linked (GlcNAc...) asparagine). 4 cysteine pairs are disulfide-bonded: Cys325/Cys345, Cys347/Cys356, Cys366/Cys388, and Cys415/Cys436. In terms of domain architecture, CUB spans 366–469 (CGAGDITATS…ARFSLNYRYD (104 aa)). The tract at residues 479-526 (TTTSTTTTTAPITVPTVSPTTTTTRQTTTTARTSTTTTTTQAPPTTTT) is disordered. The TSP type-1 domain maps to 525–566 (TTSTSQCASWSACSAQCGGCGTQSRRCGTYVETVYCNTNPCT). 3 cysteine pairs are disulfide-bonded: Cys531–Cys551, Cys537–Cys560, and Cys541–Cys565.

The cofactor is Zn(2+). Expressed in hypodermal cells. First expressed in the dorsal and lateral surface area of the middle and posterior region of embryos. At later stages, it localizes to lateral surface regions, probably corresponding to hypodermal seam cells. In L1 larvae, it is expressed in seam cells and in a few cells anterior to the nerve ring.

Its subcellular location is the secreted. In terms of biological role, metalloprotease. Required for normal hatching and migration of neuroblasts. May act by degrading eggshell proteins at hatching. The chain is Zinc metalloproteinase nas-34 (hch-1) from Caenorhabditis elegans.